A 140-amino-acid polypeptide reads, in one-letter code: MGWSFIFLFLLSVTAGVHSEVQLQQSGAELVRAGSSVKMSCKASGYTFTSYGINWVKQRPGQGLEWIGYINPGNGYINYNEKFKGKTTLTVDKSSSTAYMQLRSLTSEDSAVYFCARSHYYGGSYDFDYWGQGTPLTVSS.

An N-terminal signal peptide occupies residues 1–19; that stretch reads MGWSFIFLFLLSVTAGVHS. The region spanning 20–139 is the Ig-like domain; sequence EVQLQQSGAE…WGQGTPLTVS (120 aa).

The polypeptide is Ig heavy chain V region 93G7 (Mus musculus (Mouse)).